We begin with the raw amino-acid sequence, 276 residues long: Homeobox-leucine zipper protein HOX11 (276 aa).

The disordered stretch occupies residues 1 to 92; the sequence is MVDGHLEAST…DDGGSARKKL (92 aa). Residues 39-48 are compositionally biased toward polar residues; sequence LSSSPNNSAG. Residues 58-73 are compositionally biased toward gly residues; the sequence is HGLGGNDAAPGGGGGD. Residues 87–146 constitute a DNA-binding region (homeobox); sequence SARKKLRLSKEQSAFLEESFKEHSTLNPKQKLALAKQLNLRPRQVEVWFQNRRARTKLKQ. The leucine-zipper stretch occupies residues 145-189; the sequence is KQTEVDCEYLKRCCETLTEENRRLQKELAELRALKTVHPFYMHLP. The interval 214–244 is disordered; it reads AATSSTAAPPAAPSSGGIAATSSSSAAAAAA.

Belongs to the HD-ZIP homeobox family. Class II subfamily. Expressed in stems, leaf sheaths and blades and panicles.

It localises to the nucleus. Its function is as follows. Probable transcription factor. The chain is Homeobox-leucine zipper protein HOX11 (HOX11) from Oryza sativa subsp. indica (Rice).